Consider the following 68-residue polypeptide: DLITNSYTRGKPRHVTSWPKLRALGNCVPVPGQCIGNGCFCDREAPHGNCCDTDGCTSLFWCPGSKAG.

Residues 1–21 (DLITNSYTRGKPRHVTSWPKL) constitute a propeptide that is removed on maturation.

In terms of processing, contains 4 disulfide bonds. Expressed by the venom duct.

The protein resides in the secreted. This is Conotoxin Cal12.1p3 from Californiconus californicus (California cone).